A 206-amino-acid polypeptide reads, in one-letter code: Endoplasmic reticulum transmembrane protein 1 (206 aa).

At 1-7 the chain is on the lumenal side; it reads MSLYFTT. A helical membrane pass occupies residues 8–28; sequence LFLLLTVEMVMLFIFVLPLPF. Residues 29–45 are Cytoplasmic-facing; that stretch reads RIRRGIFSTYNQLTAKQ. The helical transmembrane segment at 46-66 threads the bilayer; the sequence is QIKTIIFITGCLVGLLFIDSW. Topologically, residues 67–104 are lumenal; it reads KRSQIRVSLYHNDNSGSIGSSAVTPIQALASRAYNQRN. A helical transmembrane segment spans residues 105–125; the sequence is MYISGFILYFSICIPTVMSIV. Topologically, residues 126–206 are cytoplasmic; sequence KRLVKYQGLI…AAAEASKKGN (81 aa). Residues 140 to 163 form a disordered region; the sequence is KQKLNKPSSNSKKDSNEADSTKLQ. Over residues 150–163 the composition is skewed to basic and acidic residues; that stretch reads SKKDSNEADSTKLQ. Lys-190 participates in a covalent cross-link: Glycyl lysine isopeptide (Lys-Gly) (interchain with G-Cter in ubiquitin). The Di-lysine motif motif lies at 203–206; it reads KKGN.

This sequence belongs to the BCAP29/BCAP31 family.

It localises to the endoplasmic reticulum membrane. Functionally, may play a role in anterograde transport of membrane proteins from the endoplasmic reticulum to the Golgi. This is Endoplasmic reticulum transmembrane protein 1 (YET1) from Saccharomyces cerevisiae (strain ATCC 204508 / S288c) (Baker's yeast).